Reading from the N-terminus, the 285-residue chain is Iron uptake system component EfeM (285 aa).

The N-terminal stretch at 1 to 34 (MTYPLLTRKTLMKKTPLALLLTLGLLQTPLAAFA) is a signal peptide.

Belongs to the EfeM/EfeO family. Component of the iron transporter efeUOB/M complex composed of EfeU, EfeM and EfeB.

It is found in the periplasm. In terms of biological role, part of the iron transporter system efeUOB/M involved in iron import. Specifically binds Fe(3+), which is produced by EfeB-mediated oxidation of Fe(2+), and delivers it to the cell inner membrane permease EfeU. Also binds Zn(2+) and Cu(2+) in vitro. This Pseudomonas syringae pv. syringae (strain B728a) protein is Iron uptake system component EfeM.